We begin with the raw amino-acid sequence, 205 residues long: Beta-crystallin B2 (205 aa).

Residue A2 is modified to N-acetylalanine. Residues 2-16 (ASDHQTQAGKPQSLN) are N-terminal arm. Beta/gamma crystallin 'Greek key' domains lie at 17 to 56 (PKIIIFEQENFQGHSHELNGPCPNLKETGVEKAGSVLVQA) and 57 to 101 (GPWV…RPIK). Positions 102 to 106 (VDSQE) are connecting peptide. 2 consecutive Beta/gamma crystallin 'Greek key' domains span residues 107–148 (HKII…RVQS) and 149–191 (GTWV…RRIR). The interval 193 to 205 (MQWHQRGAFHPSN) is C-terminal arm.

Belongs to the beta/gamma-crystallin family. As to quaternary structure, homo/heterodimer, or complexes of higher-order. The structure of beta-crystallin oligomers seems to be stabilized through interactions between the N-terminal arms.

Crystallins are the dominant structural components of the vertebrate eye lens. The sequence is that of Beta-crystallin B2 (CRYBB2) from Homo sapiens (Human).